Reading from the N-terminus, the 339-residue chain is Anthranilate phosphoribosyltransferase (339 aa).

5-phospho-alpha-D-ribose 1-diphosphate-binding positions include Gly-79, 82-83, Ser-87, 89-92, 107-115, and Ser-119; these read GD, NIST, and KHGNRSISS. Residue Gly-79 participates in anthranilate binding. Ser-91 is a Mg(2+) binding site. Asn-110 lines the anthranilate pocket. Residue Arg-165 coordinates anthranilate. Asp-224 and Glu-225 together coordinate Mg(2+).

Belongs to the anthranilate phosphoribosyltransferase family. Homodimer. Requires Mg(2+) as cofactor.

It catalyses the reaction N-(5-phospho-beta-D-ribosyl)anthranilate + diphosphate = 5-phospho-alpha-D-ribose 1-diphosphate + anthranilate. It functions in the pathway amino-acid biosynthesis; L-tryptophan biosynthesis; L-tryptophan from chorismate: step 2/5. Catalyzes the transfer of the phosphoribosyl group of 5-phosphorylribose-1-pyrophosphate (PRPP) to anthranilate to yield N-(5'-phosphoribosyl)-anthranilate (PRA). In Listeria innocua serovar 6a (strain ATCC BAA-680 / CLIP 11262), this protein is Anthranilate phosphoribosyltransferase.